The sequence spans 368 residues: D-alanine--D-alanine ligase (368 aa).

In terms of domain architecture, ATP-grasp spans 151–358 (KKLLAAEGLP…YRTLISTLVD (208 aa)). 179–234 (KAELGLPVFVKPARGGSSIGITRVSNWDGLDGAIAHARLHDPKVIVEGAIIGREVE) lines the ATP pocket. Asp313, Glu325, and Asn327 together coordinate Mg(2+).

This sequence belongs to the D-alanine--D-alanine ligase family. Mg(2+) is required as a cofactor. The cofactor is Mn(2+).

Its subcellular location is the cytoplasm. The enzyme catalyses 2 D-alanine + ATP = D-alanyl-D-alanine + ADP + phosphate + H(+). It participates in cell wall biogenesis; peptidoglycan biosynthesis. Its function is as follows. Cell wall formation. The sequence is that of D-alanine--D-alanine ligase from Rhodococcus erythropolis (strain PR4 / NBRC 100887).